Here is a 428-residue protein sequence, read N- to C-terminus: MAMITDIYAREIMDSRGNPTVEVEVYLEDGSMGRADVPSGASTGAYEAVELRDGDKSRYLGKGVLKAVENVNEIIAPELIGMDALDQVGIDMAMIQLDGTPNKGKLGANAILGVSMAVARAAAESLGVPLYNYLGGFNARMLPVPMMNILNGGKHADNTVDIQEFMVMPVGATSFKEALRTGAEIFHSLKKVLGEKGLSTAVGDEGGFAPNLKSNEEAITTILDAIKAAGYEPGKDVFLALDVAATEMFKDGKYHFEGEGVVKTTEEMIAFYEDLVNKYPIISIEDGLSEDDWDGWKALTDKLGSKVQLVGDDLFVTNTERLARGIETSTGNSILVKVNQIGTLTETFEAIEMAKLAGYTAVISHRSGETEDSTISDIAVATNAGQIKTGAPSRTDRVAKYNQLLRIEDELADTARFGGRSAFYNLKK.

Residue Q163 participates in (2R)-2-phosphoglycerate binding. E205 (proton donor) is an active-site residue. 3 residues coordinate Mg(2+): D242, E285, and D312. K337, R366, S367, and K388 together coordinate (2R)-2-phosphoglycerate. K337 (proton acceptor) is an active-site residue.

It belongs to the enolase family. It depends on Mg(2+) as a cofactor.

It localises to the cytoplasm. It is found in the secreted. The protein resides in the cell surface. It catalyses the reaction (2R)-2-phosphoglycerate = phosphoenolpyruvate + H2O. The protein operates within carbohydrate degradation; glycolysis; pyruvate from D-glyceraldehyde 3-phosphate: step 4/5. In terms of biological role, catalyzes the reversible conversion of 2-phosphoglycerate (2-PG) into phosphoenolpyruvate (PEP). It is essential for the degradation of carbohydrates via glycolysis. The polypeptide is Enolase (Brevibacillus brevis (strain 47 / JCM 6285 / NBRC 100599)).